Here is a 201-residue protein sequence, read N- to C-terminus: IMP cyclohydrolase (201 aa).

It belongs to the archaeal IMP cyclohydrolase family.

The enzyme catalyses IMP + H2O = 5-formamido-1-(5-phospho-D-ribosyl)imidazole-4-carboxamide. The protein operates within purine metabolism; IMP biosynthesis via de novo pathway; IMP from 5-formamido-1-(5-phospho-D-ribosyl)imidazole-4-carboxamide: step 1/1. Catalyzes the cyclization of 5-formylamidoimidazole-4-carboxamide ribonucleotide to IMP. The chain is IMP cyclohydrolase from Methanocella arvoryzae (strain DSM 22066 / NBRC 105507 / MRE50).